A 125-amino-acid polypeptide reads, in one-letter code: MKSPALAGSLATAEVPCTHPDTTARFFRALADPTRLKLLQFILRGERTSAECVEHAGISQPRVSVHLSCLVDCGYVSARRDGKKLRYSVGDPRVADLVMLARCLAADNAAALDCCTRIPGEGEQR.

One can recognise an HTH arsR-type domain in the interval valine 15–alanine 109. Residues serine 49–serine 68 constitute a DNA-binding region (H-T-H motif). Hg(2+) contacts are provided by cysteine 69, cysteine 73, and cysteine 114.

In terms of biological role, negatively regulates the mercuric reductase merA and the organolyase merB in the absence of mercuric ions. The protein is Probable mercury resistance operon repressor (merR) of Streptomyces lividans.